The primary structure comprises 138 residues: Translation initiation factor 2 subunit beta (138 aa).

The protein belongs to the eIF-2-beta/eIF-5 family. As to quaternary structure, heterotrimer composed of an alpha, a beta and a gamma chain.

In terms of biological role, eIF-2 functions in the early steps of protein synthesis by forming a ternary complex with GTP and initiator tRNA. This chain is Translation initiation factor 2 subunit beta, found in Methanococcus maripaludis (strain DSM 14266 / JCM 13030 / NBRC 101832 / S2 / LL).